We begin with the raw amino-acid sequence, 101 residues long: Protein Tat (101 aa).

An interaction with human CREBBP region spans residues 1–24 (MEPVDPNLEPWKHPGSQPRTACNN). The interval 1–48 (MEPVDPNLEPWKHPGSQPRTACNNCYCKKCCFHCYACFTRKGLGISYG) is transactivation. Residues Cys-22, Cys-25, and Cys-27 each coordinate Zn(2+). The cysteine-rich stretch occupies residues 22 to 37 (CNNCYCKKCCFHCYAC). N6-acetyllysine; by host PCAF is present on Lys-28. Zn(2+)-binding residues include Cys-30, His-33, Cys-34, and Cys-37. Residues 38 to 48 (FTRKGLGISYG) are core. Positions 48-57 (GRKKRRQRRR) are enriched in basic residues. Residues 48-101 (GRKKRRQRRRAPQDSQTHQASLSKQPASQSRGDPTGPTESKKKVERETETDPFD) are disordered. Positions 49–57 (RKKRRQRRR) match the Nuclear localization signal, RNA-binding (TAR), and protein transduction motif. The tract at residues 49–86 (RKKRRQRRRAPQDSQTHQASLSKQPASQSRGDPTGPTE) is interaction with the host capping enzyme RNGTT. N6-acetyllysine; by host EP300 and GCN5L2 occurs at positions 50 and 51. 2 positions are modified to asymmetric dimethylarginine; by host PRMT6: Arg-52 and Arg-53. Over residues 60–79 (QDSQTHQASLSKQPASQSRG) the composition is skewed to polar residues. A Glycyl lysine isopeptide (Lys-Gly) (interchain with G-Cter in ubiquitin) cross-link involves residue Lys-71. The Cell attachment site signature appears at 78 to 80 (RGD). Positions 86-101 (ESKKKVERETETDPFD) are enriched in basic and acidic residues.

The protein belongs to the lentiviruses Tat family. In terms of assembly, interacts with host CCNT1. Associates with the P-TEFb complex composed at least of Tat, P-TEFb (CDK9 and CCNT1), TAR RNA, RNA Pol II. Recruits the HATs CREBBP, TAF1/TFIID, EP300, PCAF and GCN5L2. Interacts with host KAT5/Tip60; this interaction targets the latter to degradation. Interacts with the host deacetylase SIRT1. Interacts with host capping enzyme RNGTT; this interaction stimulates RNGTT. Binds to host KDR, and to the host integrins ITGAV/ITGB3 and ITGA5/ITGB1. Interacts with host KPNB1/importin beta-1 without previous binding to KPNA1/importin alpha-1. Interacts with EIF2AK2. Interacts with host nucleosome assembly protein NAP1L1; this interaction may be required for the transport of Tat within the nucleus, since the two proteins interact at the nuclear rim. Interacts with host C1QBP/SF2P32; this interaction involves lysine-acetylated Tat. Interacts with the host chemokine receptors CCR2, CCR3 and CXCR4. Interacts with host DPP4/CD26; this interaction may trigger an anti-proliferative effect. Interacts with host LDLR. Interacts with the host extracellular matrix metalloproteinase MMP1. Interacts with host PRMT6; this interaction mediates Tat's methylation. Interacts with, and is ubiquitinated by MDM2/Hdm2. Interacts with host PSMC3 and HTATIP2. Interacts with STAB1; this interaction may overcome SATB1-mediated repression of IL2 and IL2RA (interleukin) in T cells by binding to the same domain than HDAC1. Interacts (when acetylated) with human CDK13, thereby increasing HIV-1 mRNA splicing and promoting the production of the doubly spliced HIV-1 protein Nef. Interacts with host TBP; this interaction modulates the activity of transcriptional pre-initiation complex. Interacts with host RELA. Interacts with host PLSCR1; this interaction negatively regulates Tat transactivation activity by altering its subcellular distribution. Asymmetrical arginine methylation by host PRMT6 seems to diminish the transactivation capacity of Tat and affects the interaction with host CCNT1. In terms of processing, acetylation by EP300, CREBBP, GCN5L2/GCN5 and PCAF regulates the transactivation activity of Tat. EP300-mediated acetylation of Lys-50 promotes dissociation of Tat from the TAR RNA through the competitive binding to PCAF's bromodomain. In addition, the non-acetylated Tat's N-terminus can also interact with PCAF. PCAF-mediated acetylation of Lys-28 enhances Tat's binding to CCNT1. Lys-50 is deacetylated by SIRT1. Post-translationally, polyubiquitination by host MDM2 does not target Tat to degradation, but activates its transactivation function and fosters interaction with CCNT1 and TAR RNA. Phosphorylated by EIF2AK2 on serine and threonine residues adjacent to the basic region important for TAR RNA binding and function. Phosphorylation of Tat by EIF2AK2 is dependent on the prior activation of EIF2AK2 by dsRNA.

The protein resides in the host nucleus. It localises to the host nucleolus. The protein localises to the host cytoplasm. It is found in the secreted. Transcriptional activator that increases RNA Pol II processivity, thereby increasing the level of full-length viral transcripts. Recognizes a hairpin structure at the 5'-LTR of the nascent viral mRNAs referred to as the transactivation responsive RNA element (TAR) and recruits the cyclin T1-CDK9 complex (P-TEFb complex) that will in turn hyperphosphorylate the RNA polymerase II to allow efficient elongation. The CDK9 component of P-TEFb and other Tat-activated kinases hyperphosphorylate the C-terminus of RNA Pol II that becomes stabilized and much more processive. Other factors such as HTATSF1/Tat-SF1, SUPT5H/SPT5, and HTATIP2 are also important for Tat's function. Besides its effect on RNA Pol II processivity, Tat induces chromatin remodeling of proviral genes by recruiting the histone acetyltransferases (HATs) CREBBP, EP300 and PCAF to the chromatin. This also contributes to the increase in proviral transcription rate, especially when the provirus integrates in transcriptionally silent region of the host genome. To ensure maximal activation of the LTR, Tat mediates nuclear translocation of NF-kappa-B by interacting with host RELA. Through its interaction with host TBP, Tat may also modulate transcription initiation. Tat can reactivate a latently infected cell by penetrating in it and transactivating its LTR promoter. In the cytoplasm, Tat is thought to act as a translational activator of HIV-1 mRNAs. Its function is as follows. Extracellular circulating Tat can be endocytosed by surrounding uninfected cells via the binding to several surface receptors such as CD26, CXCR4, heparan sulfate proteoglycans (HSPG) or LDLR. Neurons are rarely infected, but they internalize Tat via their LDLR. Through its interaction with nuclear HATs, Tat is potentially able to control the acetylation-dependent cellular gene expression. Modulates the expression of many cellular genes involved in cell survival, proliferation or in coding for cytokines or cytokine receptors. Tat plays a role in T-cell and neurons apoptosis. Tat induced neurotoxicity and apoptosis probably contribute to neuroAIDS. Circulating Tat also acts as a chemokine-like and/or growth factor-like molecule that binds to specific receptors on the surface of the cells, affecting many cellular pathways. In the vascular system, Tat binds to ITGAV/ITGB3 and ITGA5/ITGB1 integrins dimers at the surface of endothelial cells and competes with bFGF for heparin-binding sites, leading to an excess of soluble bFGF. This chain is Protein Tat, found in Homo sapiens (Human).